Reading from the N-terminus, the 151-residue chain is UPF0208 membrane protein SG1605 (151 aa).

2 helical membrane-spanning segments follow: residues Phe46–Ala64 and Gly70–Leu90.

Belongs to the UPF0208 family.

The protein localises to the cell inner membrane. The protein is UPF0208 membrane protein SG1605 of Sodalis glossinidius (strain morsitans).